The chain runs to 340 residues: uncharacterized protein (340 aa).

Residues 1–25 (MLGIRAMLVMLDYYWIQLITNNDTR) form the signal peptide. At 26–225 (SNNTDTIFVS…RRYMYLFSVS (200 aa)) the chain is on the lumenal side. N-linked (GlcNAc...) asparagine; by host glycans are attached at residues Asn27, Asn54, Asn57, Asn68, Asn72, Asn78, Asn83, Asn107, Asn118, Asn146, Asn173, and Asn180. Residues 226-246 (CAGITGTVSIILVSLSLLILI) form a helical membrane-spanning segment. The Cytoplasmic portion of the chain corresponds to 247–340 (CYYRCGRLLI…PMHMVVCMPA (94 aa)).

Belongs to the HHV-5 UL20 protein family.

It is found in the host endoplasmic reticulum membrane. This is an uncharacterized protein from Human cytomegalovirus (strain AD169) (HHV-5).